The following is a 312-amino-acid chain: MTQSTPIRIATRKSPLALWQAHFVKDALQAAHPGLEVELVTMVTKGDVILDTPLAKVGGKGLFVKELEVAMLEGRADLAVHSMKDVPVDFPEGLGLVTICEREDPRDAFVSNTYSNINELPQGAVVGTCSLRRQCQLKEYRPDIIIKELRGNVGTRLGKLDAGEYDAIILAAAGLKRLKLEDRIRSFIEPEQSLPAVGQGAVGIECRVDDERLLKLLEPLNHKDTADRVLCERAMNLTLEGGCQVPIGSYALLEGDEIWLRALVGEPDGSEIVRGEVRGHRKDGEALGIQLANELLDSGARDILTKLYADHD.

C243 carries the S-(dipyrrolylmethanemethyl)cysteine modification.

Belongs to the HMBS family. As to quaternary structure, monomer. It depends on dipyrromethane as a cofactor.

It carries out the reaction 4 porphobilinogen + H2O = hydroxymethylbilane + 4 NH4(+). It participates in porphyrin-containing compound metabolism; protoporphyrin-IX biosynthesis; coproporphyrinogen-III from 5-aminolevulinate: step 2/4. Tetrapolymerization of the monopyrrole PBG into the hydroxymethylbilane pre-uroporphyrinogen in several discrete steps. This is Porphobilinogen deaminase from Vibrio parahaemolyticus serotype O3:K6 (strain RIMD 2210633).